We begin with the raw amino-acid sequence, 1261 residues long: SNF2 domain-containing protein CLASSY 2 (1261 aa).

The disordered stretch occupies residues phenylalanine 458–proline 479. In terms of domain architecture, Helicase ATP-binding spans aspartate 704–lysine 904. ATP is bound at residue histidine 717–threonine 724. The DEAH box signature appears at aspartate 855–histidine 858. The Helicase C-terminal domain occupies phenylalanine 1067 to isoleucine 1232.

The protein belongs to the helicase family. In terms of assembly, interacts with NRPD1 and SHH1.

The protein resides in the nucleus. Probable chromatin remodeling factor. The polypeptide is SNF2 domain-containing protein CLASSY 2 (CLSY2) (Arabidopsis thaliana (Mouse-ear cress)).